The following is a 300-amino-acid chain: Type II methyltransferase M.XycI (300 aa).

The interval 109–129 is disordered; sequence RGYRAPDKKNPARAMDVRPDT. Basic and acidic residues predominate over residues 112–127; the sequence is RAPDKKNPARAMDVRP.

Belongs to the N(4)/N(6)-methyltransferase family. N(4) subfamily.

The enzyme catalyses a 2'-deoxycytidine in DNA + S-adenosyl-L-methionine = an N(4)-methyl-2'-deoxycytidine in DNA + S-adenosyl-L-homocysteine + H(+). In terms of biological role, a beta subtype methylase, recognizes the double-stranded sequence 5'-CCCGGG-3', methylates C-2 on both strands, and protects the DNA from cleavage by the XcyI endonuclease. This Xanthomonas campestris pv. cyanopsidis protein is Type II methyltransferase M.XycI (xcyIM).